Reading from the N-terminus, the 415-residue chain is Exodeoxyribonuclease 7 large subunit (415 aa).

The protein belongs to the XseA family. In terms of assembly, heterooligomer composed of large and small subunits.

The protein resides in the cytoplasm. The catalysed reaction is Exonucleolytic cleavage in either 5'- to 3'- or 3'- to 5'-direction to yield nucleoside 5'-phosphates.. Bidirectionally degrades single-stranded DNA into large acid-insoluble oligonucleotides, which are then degraded further into small acid-soluble oligonucleotides. The polypeptide is Exodeoxyribonuclease 7 large subunit (Mycobacterium bovis (strain ATCC BAA-935 / AF2122/97)).